The chain runs to 489 residues: uncharacterized protein (489 aa).

12 consecutive transmembrane segments (helical) span residues 14–34 (LLFV…ISLF), 36–56 (LGPF…IVTL), 100–120 (IIGP…FSGI), 127–147 (LVNT…LAFI), 158–178 (LIAL…IVAI), 203–223 (EISF…YAGV), 241–261 (ILIV…IILN), 286–306 (AAGL…NVST), 344–364 (IWFT…IPLV), 380–400 (VGSA…FKFI), 419–439 (LFCL…FPVI), and 449–469 (HTLT…LFLL).

The protein to M.genitalium MG226.

The protein localises to the cell membrane. This is an uncharacterized protein from Mycoplasma genitalium (strain ATCC 33530 / DSM 19775 / NCTC 10195 / G37) (Mycoplasmoides genitalium).